A 396-amino-acid polypeptide reads, in one-letter code: S-adenosylmethionine synthase (396 aa).

Residue H16 coordinates ATP. D18 is a binding site for Mg(2+). Position 44 (E44) interacts with K(+). E57 and Q100 together coordinate L-methionine. Residues 100–110 form a flexible loop region; it reads QSQDIARGVDN. ATP contacts are provided by residues 162–164, D237, 243–244, A260, and K264; these read DGK and RK. D237 contacts L-methionine. Position 268 (K268) interacts with L-methionine.

Belongs to the AdoMet synthase family. As to quaternary structure, homotetramer; dimer of dimers. The cofactor is Mg(2+). K(+) serves as cofactor.

It localises to the cytoplasm. The enzyme catalyses L-methionine + ATP + H2O = S-adenosyl-L-methionine + phosphate + diphosphate. It participates in amino-acid biosynthesis; S-adenosyl-L-methionine biosynthesis; S-adenosyl-L-methionine from L-methionine: step 1/1. Functionally, catalyzes the formation of S-adenosylmethionine (AdoMet) from methionine and ATP. The overall synthetic reaction is composed of two sequential steps, AdoMet formation and the subsequent tripolyphosphate hydrolysis which occurs prior to release of AdoMet from the enzyme. The sequence is that of S-adenosylmethionine synthase from Myxococcus xanthus.